The sequence spans 103 residues: Small ribosomal subunit protein uS10 (103 aa).

The protein belongs to the universal ribosomal protein uS10 family. Part of the 30S ribosomal subunit.

Functionally, involved in the binding of tRNA to the ribosomes. In Chlorobaculum tepidum (strain ATCC 49652 / DSM 12025 / NBRC 103806 / TLS) (Chlorobium tepidum), this protein is Small ribosomal subunit protein uS10.